A 398-amino-acid chain; its full sequence is Chorismate synthase (398 aa).

NADP(+)-binding residues include Arg44 and Arg50. FMN contacts are provided by residues 133–135 (RAS), 261–262 (QA), Gly306, 321–325 (KPIPT), and Arg347.

This sequence belongs to the chorismate synthase family. Homotetramer. FMNH2 serves as cofactor.

It carries out the reaction 5-O-(1-carboxyvinyl)-3-phosphoshikimate = chorismate + phosphate. Its pathway is metabolic intermediate biosynthesis; chorismate biosynthesis; chorismate from D-erythrose 4-phosphate and phosphoenolpyruvate: step 7/7. In terms of biological role, catalyzes the anti-1,4-elimination of the C-3 phosphate and the C-6 proR hydrogen from 5-enolpyruvylshikimate-3-phosphate (EPSP) to yield chorismate, which is the branch point compound that serves as the starting substrate for the three terminal pathways of aromatic amino acid biosynthesis. This reaction introduces a second double bond into the aromatic ring system. The chain is Chorismate synthase from Aquifex aeolicus (strain VF5).